We begin with the raw amino-acid sequence, 226 residues long: ATP-dependent dethiobiotin synthetase BioD (226 aa).

12 to 17 contributes to the ATP binding site; the sequence is GIGKTV. Position 16 (Thr16) interacts with Mg(2+). Residue Lys37 is part of the active site. Thr41 contacts substrate. ATP is bound by residues Asp49, 108 to 111, 169 to 170, and 197 to 199; these read EGAG, GS, and PAG. The Mg(2+) site is built by Asp49 and Glu108.

This sequence belongs to the dethiobiotin synthetase family. In terms of assembly, homodimer. Requires Mg(2+) as cofactor.

The protein localises to the cytoplasm. The catalysed reaction is (7R,8S)-7,8-diammoniononanoate + CO2 + ATP = (4R,5S)-dethiobiotin + ADP + phosphate + 3 H(+). It participates in cofactor biosynthesis; biotin biosynthesis; biotin from 7,8-diaminononanoate: step 1/2. Its function is as follows. Catalyzes a mechanistically unusual reaction, the ATP-dependent insertion of CO2 between the N7 and N8 nitrogen atoms of 7,8-diaminopelargonic acid (DAPA, also called 7,8-diammoniononanoate) to form a ureido ring. The polypeptide is ATP-dependent dethiobiotin synthetase BioD (Mycolicibacterium gilvum (strain PYR-GCK) (Mycobacterium gilvum (strain PYR-GCK))).